The following is a 477-amino-acid chain: Homeobox protein Meis2 (477 aa).

A required for interaction with PBX1 region spans residues 71–191; that stretch reads DALKRDKDAI…KMPIDLVIDE (121 aa). In terms of domain architecture, MEIS N-terminal spans 110–193; the sequence is GGDVCSSDSF…PIDLVIDERD (84 aa). The segment covering 193–203 has biased composition (basic and acidic residues); that stretch reads DGSSKSDHEEL. Residues 193–283 are disordered; the sequence is DGSSKSDHEE…KKRQKKRGIF (91 aa). Polar residues-rich tracts occupy residues 204-217 and 239-251; these read SGSSTNLADHNPSS and GHASQSGDNSSEQ. The homeobox; TALE-type DNA-binding region spans 276 to 338; sequence RQKKRGIFPK…NARRRIVQPM (63 aa). Residues 299 to 333 are interaction with DNA; that stretch reads LTHPYPSEEQKKQLAQDTGLTILQVNNWFINARRR. The segment at 340–477 is transcriptional activation domain; sequence DQSNRAGFLL…GGQVMDIHAQ (138 aa).

The protein belongs to the TALE/MEIS homeobox family. As to quaternary structure, monomer and homodimer. Heterodimer with HOXB13. Isoform 2 interacts with TLX1. Isoform 3 interacts with HOXA13 and PBX1 isoform PBX1b. Isoform 4 interacts with SP1, SP3 and KLF4. Isoform 4 and isoform 5 interact with PBX1 isoform PBX1a; the interaction partially relieves MEIS2 autoinhibition. Isoform 3 also known as MEIS2b is part of a PDX1:PBX1b:Meis2B complex; Meis2B is recruited by PBX1b and can be replaced by isoform 4 in a small fraction of complexes. Can form trimeric complexes including HOXB8 and PBX2 or PBX3. In terms of tissue distribution, expressed in various tissues. Expressed at high level in the lymphoid organs of hematopoietic tissues. Also expressed in some regions of the brain, such as the putamen.

It is found in the nucleus. The protein localises to the cytoplasm. The protein resides in the perinuclear region. In terms of biological role, involved in transcriptional regulation. Binds to HOX or PBX proteins to form dimers, or to a DNA-bound dimer of PBX and HOX proteins and thought to have a role in stabilization of the homeoprotein-DNA complex. Isoform 3 is required for the activity of a PDX1:PBX1b:MEIS2b complex in pancreatic acinar cells involved in the transcriptional activation of the ELA1 enhancer; the complex binds to the enhancer B element and cooperates with the transcription factor 1 complex (PTF1) bound to the enhancer A element; MEIS2 is not involved in complex DNA-binding. Probably in complex with PBX1, is involved in transcriptional regulation by KLF4. Isoform 3 and isoform 4 can bind to a EPHA8 promoter sequence containing the DNA motif 5'-CGGTCA-3'; in cooperation with a PBX protein (such as PBX2) is proposed to be involved in the transcriptional activation of EPHA8 in the developing midbrain. May be involved in regulation of myeloid differentiation. Can bind to the DNA sequence 5'-TGACAG-3'in the activator ACT sequence of the D(1A) dopamine receptor (DRD1) promoter and activate DRD1 transcription; isoform 5 cannot activate DRD1 transcription. This Homo sapiens (Human) protein is Homeobox protein Meis2 (MEIS2).